The following is a 117-amino-acid chain: Small ribosomal subunit protein bS6 (117 aa).

The disordered stretch occupies residues 96–117; sequence KEAAAPAPKAAPVESAPAVEAE. A compositionally biased stretch (low complexity) spans 99-117; it reads AAPAPKAAPVESAPAVEAE.

The protein belongs to the bacterial ribosomal protein bS6 family.

Functionally, binds together with bS18 to 16S ribosomal RNA. The chain is Small ribosomal subunit protein bS6 from Geobacter sulfurreducens (strain ATCC 51573 / DSM 12127 / PCA).